The chain runs to 1185 residues: Adhesion G-protein coupled receptor G6 (1185 aa).

A signal peptide spans 1-32; that stretch reads MISFISGRWWRWKFQNTLAVFLLLICLSTSVA. The Extracellular segment spans residues 33–849; that stretch reads QSCQSSTSCN…AELIDEKNNR (817 aa). Cysteine 41 and cysteine 67 are disulfide-bonded. A CUB domain is found at 41–149; sequence CNVVLTDSQG…KGFHISYKQV (109 aa). Positions 41-354 are mediates interaction with type IV collagen; it reads CNVVLTDSQG…SSTQTDSTLS (314 aa). The interval 41–839 is inhibits receptor signaling in absence of type IV collagen; it reads CNVVLTDSQG…FGILMDVSRA (799 aa). The N-linked (GlcNAc...) asparagine glycan is linked to asparagine 68. Ca(2+) contacts are provided by glutamate 89 and aspartate 97. Residues cysteine 94 and cysteine 111 are joined by a disulfide bond. Asparagine 121 carries N-linked (GlcNAc...) asparagine glycosylation. Residues aspartate 134, serine 136, and valine 137 each coordinate Ca(2+). A Pentraxin (PTX) domain is found at 154–355; that stretch reads RNQKVTMPKS…STQTDSTLSC (202 aa). Cystine bridges form between cysteine 185–cysteine 248, cysteine 229–cysteine 271, and cysteine 369–cysteine 375. Asparagine 395, asparagine 429, asparagine 470, asparagine 539, asparagine 550, asparagine 562, asparagine 565, asparagine 613, asparagine 680, asparagine 691, asparagine 719, asparagine 763, asparagine 799, and asparagine 818 each carry an N-linked (GlcNAc...) asparagine glycan. 2 cysteine pairs are disulfide-bonded: cysteine 508-cysteine 544 and cysteine 532-cysteine 563. Residues 658–840 form the GAIN-B domain; that stretch reads PSLTISSKNL…GILMDVSRAA (183 aa). Intrachain disulfides connect cysteine 790-cysteine 822 and cysteine 809-cysteine 824. Positions 790 to 840 are GPS; the sequence is CVFWDFNLQNYSGGCNSDGCKVGSDSNSNRTVCLCNHLTHFGILMDVSRAA. A stachel region spans residues 829–837; sequence HFGILMDVS. The chain crosses the membrane as a helical span at residues 850–870; the sequence is VLTFITYIGCGISAIFSAATL. The Cytoplasmic portion of the chain corresponds to 871 to 886; that stretch reads LTYIAFEKLRRDYPSK. Residues 887–907 form a helical membrane-spanning segment; the sequence is ILMNLSTSLLFLNMVFLLDGW. Topologically, residues 908 to 915 are extracellular; the sequence is LASYEIKE. A helical membrane pass occupies residues 916 to 936; it reads LCVTVAVFLHFFLLTSFTWMG. Residues 937–957 lie on the Cytoplasmic side of the membrane; sequence LESIHMYIALVKVFNTYIRRY. A helical transmembrane segment spans residues 958 to 978; sequence ILKFCIVGWGVPAAIVGIVLA. Residues 979 to 1013 are Extracellular-facing; that stretch reads VSKDSYGKNYYGKGKDGQGTSEFCWILNPVVFYVT. The helical transmembrane segment at 1014–1034 threads the bilayer; the sequence is CVAYFSIIFLMNVAMFIVVMI. At 1035-1057 the chain is on the cytoplasmic side; the sequence is QICGRNGKRSNRTLREDILRNLR. A helical membrane pass occupies residues 1058-1080; it reads SVVSLTFLLGMTWGFAFFAWGPV. Over 1081-1083 the chain is Extracellular; that stretch reads SLA. A helical membrane pass occupies residues 1084–1106; that stretch reads FMYLFTIFNSLQGLFIFVFHCAL. Position 1092 (asparagine 1092) interacts with 17alpha-hydroxyprogesterone. Residues 1107–1185 are Cytoplasmic-facing; it reads KENVQKQWRR…RHSNADSTLQ (79 aa). The tract at residues 1138–1160 is disordered; it reads NTKKVSSDNLGKSLSSSSFGSTT. Residues 1144–1158 are compositionally biased toward low complexity; that stretch reads SDNLGKSLSSSSFGS.

It belongs to the G-protein coupled receptor 2 family. Adhesion G-protein coupled receptor (ADGR) subfamily. Post-translationally, autoproteolytically processed at the GPS region of the GAIN-B domain; this cleavage modulates receptor activity. Expressed in Schwann cells of the posterior lateral line nerve and in brain.

Its subcellular location is the cell membrane. With respect to regulation, forms a heterodimer of 2 chains generated by proteolytic processing that remain associated through non-covalent interactions mediated by the GAIN-B domain. In the inactivated receptor, the Stachel sequence (also named stalk) is embedded in the GAIN-B domain, where it adopts a beta-strand conformation. On activation, the Stachel moves into the 7 transmembrane region and adopts a twisted hook-shaped configuration that forms contacts within the receptor, leading to coupling of a G-alpha protein, which activates signaling. The cleaved GAIN-B and N-terminal domains can then dissociate from the rest of the receptor. Its function is as follows. Adhesion G-protein coupled receptor (aGPCR) for steroid hormones, such as progesterone and 17alpha-hydroxyprogesterone (17OHP). Ligand binding causes a conformation change that triggers signaling via guanine nucleotide-binding proteins (G proteins) and modulates the activity of downstream effectors, such as adenylate cyclase. Adgrg6 is coupled to G(i) G alpha proteins and mediates inhibition of adenylate cyclase. Also able to couple to G(q) G proteins. Involved in myelination of the peripheral nervous system: required for differentiation of promyelinating Schwann cells and for normal myelination of axons. G-protein coupled receptor activity can also be activated by type IV collagen, a major constituent of the basement membrane. Also plays a role inner ear development. The chain is Adhesion G-protein coupled receptor G6 (adgrg6) from Danio rerio (Zebrafish).